Reading from the N-terminus, the 356-residue chain is Holliday junction branch migration complex subunit RuvB (356 aa).

Residues 4 to 190 are large ATPase domain (RuvB-L); sequence TDKLAAERII…FGIVARLEFY (187 aa). ATP contacts are provided by residues Leu29, Arg30, Gly71, Lys74, Thr75, Thr76, 137–139, Arg180, Tyr190, and Arg227; that span reads EDY. Thr75 serves as a coordination point for Mg(2+). The interval 191–261 is small ATPAse domain (RuvB-S); that stretch reads DAEQLSRIVR…VADAALAMLD (71 aa). The interval 264 to 356 is head domain (RuvB-H); that stretch reads PVGFDLMDRK…NLWDTPDAER (93 aa). DNA is bound by residues Arg300, Arg319, and Arg324.

The protein belongs to the RuvB family. Homohexamer. Forms an RuvA(8)-RuvB(12)-Holliday junction (HJ) complex. HJ DNA is sandwiched between 2 RuvA tetramers; dsDNA enters through RuvA and exits via RuvB. An RuvB hexamer assembles on each DNA strand where it exits the tetramer. Each RuvB hexamer is contacted by two RuvA subunits (via domain III) on 2 adjacent RuvB subunits; this complex drives branch migration. In the full resolvosome a probable DNA-RuvA(4)-RuvB(12)-RuvC(2) complex forms which resolves the HJ.

It is found in the cytoplasm. It catalyses the reaction ATP + H2O = ADP + phosphate + H(+). In terms of biological role, the RuvA-RuvB-RuvC complex processes Holliday junction (HJ) DNA during genetic recombination and DNA repair, while the RuvA-RuvB complex plays an important role in the rescue of blocked DNA replication forks via replication fork reversal (RFR). RuvA specifically binds to HJ cruciform DNA, conferring on it an open structure. The RuvB hexamer acts as an ATP-dependent pump, pulling dsDNA into and through the RuvAB complex. RuvB forms 2 homohexamers on either side of HJ DNA bound by 1 or 2 RuvA tetramers; 4 subunits per hexamer contact DNA at a time. Coordinated motions by a converter formed by DNA-disengaged RuvB subunits stimulates ATP hydrolysis and nucleotide exchange. Immobilization of the converter enables RuvB to convert the ATP-contained energy into a lever motion, pulling 2 nucleotides of DNA out of the RuvA tetramer per ATP hydrolyzed, thus driving DNA branch migration. The RuvB motors rotate together with the DNA substrate, which together with the progressing nucleotide cycle form the mechanistic basis for DNA recombination by continuous HJ branch migration. Branch migration allows RuvC to scan DNA until it finds its consensus sequence, where it cleaves and resolves cruciform DNA. This is Holliday junction branch migration complex subunit RuvB from Burkholderia thailandensis (strain ATCC 700388 / DSM 13276 / CCUG 48851 / CIP 106301 / E264).